The chain runs to 451 residues: Serine/threonine-protein kinase VRK3 (451 aa).

Disordered regions lie at residues 28–61 and 74–125; these read KHEGSQSFVKPFTSSSQGSRRKTNTSSETSSKKV and LPSE…MTAS. Residues 32–45 show a composition bias toward polar residues; that stretch reads SQSFVKPFTSSSQG. The Nuclear localization signal motif lies at 47–62; that stretch reads RRKTNTSSETSSKKVK. A phosphoserine mark is found at serine 53, serine 57, serine 80, serine 81, serine 88, and serine 106. The segment covering 78–91 has biased composition (polar residues); the sequence is GKSSGSEDTLSTSG. Low complexity predominate over residues 98-116; that stretch reads SRSPTPRSSPQTTRQSPQT. The region spanning 123-434 is the Protein kinase domain; sequence TASLEALPVG…TLRNELEALL (312 aa).

It belongs to the protein kinase superfamily. CK1 Ser/Thr protein kinase family. VRK subfamily. As to quaternary structure, interacts with DUSP3. Interacts with RAN. Interacts with HSP70/HSPA1A. Phosphorylated at Ser-106 by CDK5; leading to protection of the cell against H2O2-induced apoptosis. In terms of processing, ubiquitinated by RNF144A.

Its subcellular location is the nucleus. The protein localises to the cytoplasm. It catalyses the reaction L-seryl-[protein] + ATP = O-phospho-L-seryl-[protein] + ADP + H(+). Its function is as follows. Plays a role in the regulation of the cell cycle by phosphorylating the nuclear envelope protein barrier-to-autointegration factor/BAF that is required for disassembly and reassembly, respectively, of the nuclear envelope during mitosis. Under normal physiological conditions, negatively regulates ERK activity along with VHR phosphatase in the nucleus, causing timely and transient action of ERK. Stress conditions activate CDK5 which phosphorylates VRK3 to increase VHR phosphatase activity and suppress prolonged ERK activation that causes cell death. For example, upon glutamate induction, promotes nuclear localization of HSP70/HSPA1A to inhibit ERK activation via VHR phosphatase. This Bos taurus (Bovine) protein is Serine/threonine-protein kinase VRK3 (VRK3).